Here is an 86-residue protein sequence, read N- to C-terminus: Exodeoxyribonuclease 7 small subunit (86 aa).

The tract at residues 67-86 (RVSPASGGATEAPAPAERDR) is disordered.

Belongs to the XseB family. Heterooligomer composed of large and small subunits.

Its subcellular location is the cytoplasm. The catalysed reaction is Exonucleolytic cleavage in either 5'- to 3'- or 3'- to 5'-direction to yield nucleoside 5'-phosphates.. In terms of biological role, bidirectionally degrades single-stranded DNA into large acid-insoluble oligonucleotides, which are then degraded further into small acid-soluble oligonucleotides. In Beutenbergia cavernae (strain ATCC BAA-8 / DSM 12333 / CCUG 43141 / JCM 11478 / NBRC 16432 / NCIMB 13614 / HKI 0122), this protein is Exodeoxyribonuclease 7 small subunit.